The sequence spans 216 residues: Imidazole glycerol phosphate synthase subunit HisH (216 aa).

The region spanning 2–216 is the Glutamine amidotransferase type-1 domain; the sequence is SIAIIDYGSG…LISNFLRWKP (215 aa). Cys88 serves as the catalytic Nucleophile. Residues His196 and Glu198 contribute to the active site.

Heterodimer of HisH and HisF.

The protein resides in the cytoplasm. It catalyses the reaction 5-[(5-phospho-1-deoxy-D-ribulos-1-ylimino)methylamino]-1-(5-phospho-beta-D-ribosyl)imidazole-4-carboxamide + L-glutamine = D-erythro-1-(imidazol-4-yl)glycerol 3-phosphate + 5-amino-1-(5-phospho-beta-D-ribosyl)imidazole-4-carboxamide + L-glutamate + H(+). It carries out the reaction L-glutamine + H2O = L-glutamate + NH4(+). It participates in amino-acid biosynthesis; L-histidine biosynthesis; L-histidine from 5-phospho-alpha-D-ribose 1-diphosphate: step 5/9. IGPS catalyzes the conversion of PRFAR and glutamine to IGP, AICAR and glutamate. The HisH subunit catalyzes the hydrolysis of glutamine to glutamate and ammonia as part of the synthesis of IGP and AICAR. The resulting ammonia molecule is channeled to the active site of HisF. In Bradyrhizobium diazoefficiens (strain JCM 10833 / BCRC 13528 / IAM 13628 / NBRC 14792 / USDA 110), this protein is Imidazole glycerol phosphate synthase subunit HisH.